A 132-amino-acid chain; its full sequence is Ribosome-binding factor A (132 aa).

This sequence belongs to the RbfA family. As to quaternary structure, monomer. Binds 30S ribosomal subunits, but not 50S ribosomal subunits or 70S ribosomes.

Its subcellular location is the cytoplasm. Functionally, one of several proteins that assist in the late maturation steps of the functional core of the 30S ribosomal subunit. Associates with free 30S ribosomal subunits (but not with 30S subunits that are part of 70S ribosomes or polysomes). Required for efficient processing of 16S rRNA. May interact with the 5'-terminal helix region of 16S rRNA. The protein is Ribosome-binding factor A of Burkholderia vietnamiensis (strain G4 / LMG 22486) (Burkholderia cepacia (strain R1808)).